Here is a 644-residue protein sequence, read N- to C-terminus: Arabinosyltransferase XEG113 (644 aa).

Topologically, residues 1–17 (MVEGWRNGFRDATNSKP) are cytoplasmic. A helical; Signal-anchor for type II membrane protein membrane pass occupies residues 18 to 38 (LFVTIYATVIIGVLVSSFYVF). The Lumenal portion of the chain corresponds to 39 to 644 (SAIYSPTNGS…QTPEEDHPPL (606 aa)). N-linked (GlcNAc...) asparagine glycans are attached at residues asparagine 46 and asparagine 70. Positions 226 to 228 (DTD) match the DXD motif motif. Residues asparagine 446 and asparagine 542 are each glycosylated (N-linked (GlcNAc...) asparagine).

The protein belongs to the glycosyltransferase 77 family.

The protein resides in the golgi apparatus membrane. In terms of biological role, plays a role in the arabinosylation of cell wall components. Involved in the arabinosylation of extensin proteins in root hair cells. Extensins are structural glycoproteins present in cell walls and its arabinosylation is important for cell elongation, root hair cell development, lateral root development and root hair tip growth. This Arabidopsis thaliana (Mouse-ear cress) protein is Arabinosyltransferase XEG113.